A 503-amino-acid chain; its full sequence is Maturase K (503 aa).

The protein belongs to the intron maturase 2 family. MatK subfamily.

It localises to the plastid. The protein resides in the chloroplast. Its function is as follows. Usually encoded in the trnK tRNA gene intron. Probably assists in splicing its own and other chloroplast group II introns. The protein is Maturase K of Backhousia subargentea (Giant ironwood).